Here is a 428-residue protein sequence, read N- to C-terminus: Flotillin-2 (428 aa).

The N-myristoyl glycine moiety is linked to residue glycine 2. Cysteine 4 carries S-palmitoyl cysteine; by ZDHHC5 lipidation. Cysteine 19 carries the S-palmitoyl cysteine lipid modification. Residue cysteine 20 is the site of S-palmitoyl cysteine; by ZDHHC5 attachment. Position 405 is a phosphoserine (serine 405).

The protein belongs to the band 7/mec-2 family. Flotillin subfamily. As to quaternary structure, heterooligomeric complex of flotillin-1 and flotillin-2 and caveolin-1 and caveolin-2. Interacts with ECPAS. Post-translationally, ZDHHC5-catalyzed palmitoylation may be required for the formation of higher-order complexes and for neurite outgrowth in cultured neural stem cells.

Its subcellular location is the cell membrane. The protein localises to the membrane. It localises to the caveola. The protein resides in the endosome. In terms of biological role, may act as a scaffolding protein within caveolar membranes, functionally participating in formation of caveolae or caveolae-like vesicles. May be involved in epidermal cell adhesion and epidermal structure and function. This Bos taurus (Bovine) protein is Flotillin-2 (FLOT2).